Reading from the N-terminus, the 392-residue chain is Formate-dependent phosphoribosylglycinamide formyltransferase (392 aa).

Residues 22–23 (EL) and glutamate 82 contribute to the N(1)-(5-phospho-beta-D-ribosyl)glycinamide site. ATP-binding positions include arginine 114, lysine 155, 160 to 165 (SSGKGQ), 195 to 198 (EGVV), and glutamate 203. The ATP-grasp domain occupies 119-308 (RLAAEELQLP…EFALHVRAFL (190 aa)). Mg(2+) is bound by residues glutamate 267 and glutamate 279. N(1)-(5-phospho-beta-D-ribosyl)glycinamide is bound by residues aspartate 286, lysine 355, and 362-363 (RR).

This sequence belongs to the PurK/PurT family. Homodimer.

It catalyses the reaction N(1)-(5-phospho-beta-D-ribosyl)glycinamide + formate + ATP = N(2)-formyl-N(1)-(5-phospho-beta-D-ribosyl)glycinamide + ADP + phosphate + H(+). The protein operates within purine metabolism; IMP biosynthesis via de novo pathway; N(2)-formyl-N(1)-(5-phospho-D-ribosyl)glycinamide from N(1)-(5-phospho-D-ribosyl)glycinamide (formate route): step 1/1. In terms of biological role, involved in the de novo purine biosynthesis. Catalyzes the transfer of formate to 5-phospho-ribosyl-glycinamide (GAR), producing 5-phospho-ribosyl-N-formylglycinamide (FGAR). Formate is provided by PurU via hydrolysis of 10-formyl-tetrahydrofolate. The protein is Formate-dependent phosphoribosylglycinamide formyltransferase of Shigella sonnei (strain Ss046).